A 1486-amino-acid polypeptide reads, in one-letter code: Chromosome partition protein MukB (1486 aa).

Position 34–41 (Gly34–Ser41) interacts with ATP. 3 coiled-coil regions span residues Leu326–Gln418, Leu444–Gln480, and Arg509–Val603. The interval Pro666–Arg783 is flexible hinge. Coiled-coil stretches lie at residues Glu835–Glu923, Glu977–Ala1115, and Val1209–Ser1266.

The protein belongs to the SMC family. MukB subfamily. Homodimerization via its hinge domain. Binds to DNA via its C-terminal region. Interacts, and probably forms a ternary complex, with MukE and MukF via its C-terminal region. The complex formation is stimulated by calcium or magnesium. Interacts with tubulin-related protein FtsZ.

The protein resides in the cytoplasm. It localises to the nucleoid. Functionally, plays a central role in chromosome condensation, segregation and cell cycle progression. Functions as a homodimer, which is essential for chromosome partition. Involved in negative DNA supercoiling in vivo, and by this means organize and compact chromosomes. May achieve or facilitate chromosome segregation by condensation DNA from both sides of a centrally located replisome during cell division. This Escherichia fergusonii (strain ATCC 35469 / DSM 13698 / CCUG 18766 / IAM 14443 / JCM 21226 / LMG 7866 / NBRC 102419 / NCTC 12128 / CDC 0568-73) protein is Chromosome partition protein MukB.